We begin with the raw amino-acid sequence, 36 residues long: Tddefensin (36 aa).

3 cysteine pairs are disulfide-bonded: Cys-3–Cys-24, Cys-10–Cys-32, and Cys-14–Cys-34.

The protein belongs to the invertebrate defensin family. As to expression, expressed by the venom gland.

The protein localises to the secreted. Its function is as follows. Antibacterial peptide mostly active against Gram-positive bacteria. This is Tddefensin from Tityus discrepans (Venezuelan scorpion).